A 132-amino-acid chain; its full sequence is S-protein homolog 19 (132 aa).

A signal peptide spans 1 to 26 (MSGSLAFHIIMSVTFMVFFFGGLCEA). N-linked (GlcNAc...) asparagine glycosylation is present at N87.

The protein belongs to the plant self-incompatibility (S1) protein family.

It localises to the secreted. This Arabidopsis thaliana (Mouse-ear cress) protein is S-protein homolog 19.